Reading from the N-terminus, the 308-residue chain is GTP-binding protein RAD (308 aa).

Residues 1-15 are compositionally biased toward gly residues; it reads MTLNGGSGASGSRGA. The disordered stretch occupies residues 1-86; that stretch reads MTLNGGSGAS…SDSLSSGGSG (86 aa). Omega-N-methylarginine is present on Arg24. Phosphoserine is present on Ser26. Residues 57-82 show a composition bias toward low complexity; sequence ATTAAGTRTQGQRLDWPEGSSDSLSS. GTP-binding positions include 98–105 and 203–206; these read GAPGVGKS and NKSD. The interval 278-297 is calmodulin-binding; the sequence is AKRFLGRIVARNSRKMAFRA.

Belongs to the small GTPase superfamily. RGK family. As to quaternary structure, interacts with Calmodulin preferentially in the inactive, GDP-bound form. Interacts with CAMK2D. Interacts with CACNB2; interaction may be involved in beta-adrenergic regulation of heart rate and contractile force. Interaction with CACNB2 regulates the trafficking of CACNA1C to the cell membrane. Phosphorylation at Ser-26, Ser-39, Ser-273 and Ser-301 may be involved in regulating inhibition of voltage-gated L-type Ca(2+) channels.

The protein resides in the cell membrane. Its function is as follows. May regulate basal voltage-dependent L-type Ca(2+) currents and be required for beta-adrenergic augmentation of Ca(2+) influx in cardiomyocytes, thereby regulating increases in heart rate and contractile force. May play an important role in cardiac antiarrhythmia via the strong suppression of voltage-dependent L-type Ca(2+) currents. Regulates voltage-gated L-type calcium channel subunit alpha-1C trafficking to the cell membrane. Inhibits cardiac hypertrophy through the calmodulin-dependent kinase II (CaMKII) pathway. Inhibits phosphorylation and activation of CAMK2D. The polypeptide is GTP-binding protein RAD (Rrad) (Mus musculus (Mouse)).